Consider the following 680-residue polypeptide: Tumor protein 63 (680 aa).

The tract at residues 1 to 107 (MNFETSRCAT…MQDSDLSDPM (107 aa)) is transcription activation. A compositionally biased stretch (polar residues) spans 123 to 157 (QIQNGSSSTSPYNTDHAQNSVTAPSPYAQPSSTFD). The disordered stretch occupies residues 123–171 (QIQNGSSSTSPYNTDHAQNSVTAPSPYAQPSSTFDALSPSPAIPSNTDY). Residues 170–362 (DYPGPHSFDV…KADEDSIRKQ (193 aa)) mediate DNA binding. Zn(2+)-binding residues include Cys244, His247, Cys308, and Cys312. Positions 351 to 360 (DRKADEDSIR) are enriched in basic and acidic residues. 2 disordered regions span residues 351 to 393 (DRKA…IKKR) and 436 to 472 (RQQQ…MNSM). The interval 352–388 (RKADEDSIRKQQVSDSAKNGDGTKRPFRQNTHGIQMT) is interaction with HIPK2. The segment covering 379–389 (RQNTHGIQMTS) has biased composition (polar residues). The oligomerization stretch occupies residues 394–443 (RSPDDELLYLPVRGRETYEMLLKIKESLELMQYLPQHTIETYRQQQQQQH). Over residues 437-463 (QQQQQQHQHLLQKQTSMQSQSSYGNSS) the composition is skewed to low complexity. The 67-residue stretch at 541 to 607 (PPYPTDCSIV…WKGILDHRQL (67 aa)) folds into the SAM domain. Residues 610-680 (FSSPPHLLRT…KQQRIKEEGE (71 aa)) are transactivation inhibition. Lys676 is covalently cross-linked (Glycyl lysine isopeptide (Lys-Gly) (interchain with G-Cter in SUMO)).

It belongs to the p53 family. Binds DNA as a homotetramer. Isoform composition of the tetramer may determine transactivation activity. Interacts with HIPK2. Interacts with SSRP1, leading to stimulate coactivator activity. Interacts with PDS5A. Interacts (via activation domain) with NOC2L. Interacts with WWP1. Zn(2+) is required as a cofactor. May be sumoylated. In terms of processing, ubiquitinated. Polyubiquitination involves WWP1 and leads to proteasomal degradation of this protein. Widely expressed, notably in thymus, prostate, placenta and skeletal muscle, although the precise isoform varies according to tissue type. Progenitor cell layers of skin, breast and prostate express high levels of DeltaN-type isoforms.

It localises to the nucleus. Its function is as follows. Acts as a sequence specific DNA binding transcriptional activator or repressor. The isoforms contain a varying set of transactivation and auto-regulating transactivation inhibiting domains thus showing an isoform specific activity. May be required in conjunction with TP73/p73 for initiation of p53/TP53 dependent apoptosis in response to genotoxic insults and the presence of activated oncogenes. Involved in Notch signaling by probably inducing JAG1 and JAG2. Activates transcription of the p21 promoter. Activates RIPK4 transcription. Plays a role in the regulation of epithelial morphogenesis. The ratio of DeltaN-type and TA*-type isoforms may govern the maintenance of epithelial stem cell compartments and regulate the initiation of epithelial stratification from the undifferentiated embryonal ectoderm. Required for limb formation from the apical ectodermal ridge. This chain is Tumor protein 63 (Tp63), found in Mus musculus (Mouse).